The following is a 368-amino-acid chain: Protein trichome birefringence-like 43 (368 aa).

The chain crosses the membrane as a helical; Signal-anchor for type II membrane protein span at residues 9 to 25 (GVVSVMVLMILVLLKQI). A GDS motif motif is present at residues 117 to 119 (GDS). Positions 344–358 (DCSHWCLSGVPDSWN) match the DCXHWCLPGXXDXWN motif motif.

It belongs to the PC-esterase family. TBL subfamily.

Its subcellular location is the membrane. Its function is as follows. May act as a bridging protein that binds pectin and other cell wall polysaccharides. Probably involved in maintaining esterification of pectins. May be involved in the specific O-acetylation of cell wall polymers. The polypeptide is Protein trichome birefringence-like 43 (TBL43) (Arabidopsis thaliana (Mouse-ear cress)).